The sequence spans 344 residues: Beta-1,4-galactosyltransferase 4 (344 aa).

The Cytoplasmic segment spans residues Met-1–Arg-12. Residues Leu-13–Ile-38 traverse the membrane as a helical; Signal-anchor for type II membrane protein segment. Residues Gln-39–Ala-344 lie on the Lumenal side of the membrane. The cysteines at positions 77 and 118 are disulfide-linked. UDP-alpha-D-galactose contacts are provided by residues Pro-129–Arg-133, Phe-168–Arg-170, and Val-195–Asp-196. Residues Cys-189 and Cys-208 are joined by a disulfide bond. Asp-196 lines the Mn(2+) pocket. Asn-220 carries N-linked (GlcNAc...) asparagine glycosylation. UDP-alpha-D-galactose is bound by residues Tyr-224 and Trp-256. Gly-258 to Asp-261 contributes to the N-acetyl-D-glucosamine binding site. A Mn(2+)-binding site is contributed by His-289. His-289–Arg-291 is a binding site for UDP-alpha-D-galactose. Position 301 (Arg-301) interacts with N-acetyl-D-glucosamine. A glycan (N-linked (GlcNAc...) asparagine) is linked at Asn-335.

Belongs to the glycosyltransferase 7 family. Interacts with SLC35A2/UGT1. Mn(2+) is required as a cofactor.

Its subcellular location is the golgi apparatus membrane. It is found in the secreted. The catalysed reaction is N-acetyl-D-glucosamine + UDP-alpha-D-galactose = beta-D-galactosyl-(1-&gt;4)-N-acetyl-D-glucosamine + UDP + H(+). The enzyme catalyses a beta-D-GlcNAc-(1-&gt;3)-beta-D-Gal-(1-&gt;4)-beta-D-Glc-(1&lt;-&gt;1)-Cer(d18:1(4E)) + UDP-alpha-D-galactose = a neolactoside nLc4Cer(d18:1(4E)) + UDP + H(+). It catalyses the reaction 3-O-{beta-D-galactosyl-(1-&gt;3)-[6-O-sulfo-N-acetyl-beta-D-glucosaminyl-(1-&gt;6)]-N-acetyl-alpha-D-galactosaminyl}-L-seryl-[protein] + UDP-alpha-D-galactose = 3-O-{beta-D-galactosyl-(1-&gt;3)-[beta-D-galactosyl-(1-&gt;4)-6-O-sulfo-N-acetyl-beta-D-glucosaminyl-(1-&gt;6)]-N-acetyl-alpha-D-galactosaminyl}-L-seryl-[protein] + UDP + H(+). It carries out the reaction 3-O-{beta-D-galactosyl-(1-&gt;3)-[6-O-sulfo-N-acetyl-beta-D-glucosaminyl-(1-&gt;6)]-N-acetyl-alpha-D-galactosaminyl}-L-threonyl-[protein] + UDP-alpha-D-galactose = 3-O-{beta-D-galactosyl-(1-&gt;3)-[beta-D-galactosyl-(1-&gt;4)-6-O-sulfo-N-acetyl-beta-D-glucosaminyl-(1-&gt;6)]-N-acetyl-alpha-D-galactosaminyl}-L-threonyl-[protein] + UDP + H(+). It functions in the pathway protein modification; protein glycosylation. The protein operates within glycolipid biosynthesis. Functionally, galactose (Gal) transferase involved in the synthesis of terminal N-acetyllactosamine (LacNac) unit present on glycan chains of glycoproteins and glycosphingolipids. Catalyzes the transfer of Gal residue via a beta1-&gt;4 linkage from UDP-Gal to the non-reducing terminal N-acetyl glucosamine 6-O-sulfate (6-O-sulfoGlcNAc) in the linearly growing chain of both N- and O-linked keratan sulfate proteoglycans. Cooperates with B3GNT7 N-acetyl glucosamine transferase and CHST6 and CHST1 sulfotransferases to construct and elongate mono- and disulfated disaccharide units [-&gt;3Galbeta1-&gt;4(6-sulfoGlcNAcbeta)1-&gt;] and [-&gt;3(6-sulfoGalbeta)1-&gt;4(6-sulfoGlcNAcbeta)1-&gt;] within keratan sulfate polymer. Transfers Gal residue via a beta1-&gt;4 linkage to terminal 6-O-sulfoGlcNAc within the LacNac unit of core 2 O-glycans forming 6-sulfo-sialyl-Lewis X (sLex). May contribute to the generation of sLex epitope on mucin-type glycoproteins that serve as ligands for SELL/L-selectin, a major regulator of leukocyte migration. In the biosynthesis pathway of neolacto-series glycosphingolipids, transfers Gal residue via a beta1-&gt;4 linkage to terminal GlcNAc of a lactotriaosylceramide (Lc3Cer) acceptor to form a neolactotetraosylceramide. This is Beta-1,4-galactosyltransferase 4 (B4galt4) from Rattus norvegicus (Rat).